The sequence spans 191 residues: Cell division protein SepF (191 aa).

Residues 157–178 (YLNESPAQPVQTTTSFGRTATP) show a composition bias toward polar residues. Positions 157–191 (YLNESPAQPVQTTTSFGRTATPTPAWGTDSRYAAQ) are disordered.

Belongs to the SepF family. Homodimer. Interacts with FtsZ.

It localises to the cytoplasm. Its function is as follows. Cell division protein that is part of the divisome complex and is recruited early to the Z-ring. Probably stimulates Z-ring formation, perhaps through the cross-linking of FtsZ protofilaments. Its function overlaps with FtsA. The protein is Cell division protein SepF of Synechococcus elongatus (strain ATCC 33912 / PCC 7942 / FACHB-805) (Anacystis nidulans R2).